The following is a 429-amino-acid chain: E3 ubiquitin-protein ligase ZNRF4 (429 aa).

The N-terminal stretch at Met1–Ala27 is a signal peptide. Over Val28–Pro250 the chain is Lumenal. The disordered stretch occupies residues Pro30–Gln64. Residues Pro37–Pro49 are compositionally biased toward basic residues. Residue Asn152 is glycosylated (N-linked (GlcNAc...) asparagine). The PA domain maps to Asn152–Arg223. The chain crosses the membrane as a helical span at residues Val251–Val271. Residues Leu272–Gln429 lie on the Cytoplasmic side of the membrane. The RING-type; atypical zinc-finger motif lies at Cys309–Lys352. Disordered regions lie at residues Thr358 to Pro381 and Thr409 to Gln429. Residues Thr409 to Ser420 show a composition bias toward polar residues.

As to quaternary structure, interacts with CANX.

It localises to the endoplasmic reticulum membrane. It catalyses the reaction S-ubiquitinyl-[E2 ubiquitin-conjugating enzyme]-L-cysteine + [acceptor protein]-L-lysine = [E2 ubiquitin-conjugating enzyme]-L-cysteine + N(6)-ubiquitinyl-[acceptor protein]-L-lysine.. It participates in protein modification; protein ubiquitination. Functionally, E3 ubiquitin-protein ligase that acts as a negative regulator of NOD2 signaling by mediating ubiquitination and degradation of RIPK2. Also catalyzes ubiquitination and proteasomal degradation of CANX within the endoplasmic reticulum. Could have a role in spermatogenesis. The chain is E3 ubiquitin-protein ligase ZNRF4 (ZNRF4) from Macaca fascicularis (Crab-eating macaque).